The chain runs to 279 residues: Shikimate dehydrogenase (NADP(+)) (279 aa).

Shikimate contacts are provided by residues 18-20 (SRS) and Thr-64. The Proton acceptor role is filled by Lys-68. Glu-80 contributes to the NADP(+) binding site. The shikimate site is built by Asn-89 and Asp-104. Residues 129 to 133 (GAGGA), 153 to 158 (NRTVSR), and Ile-218 each bind NADP(+). Tyr-220 contributes to the shikimate binding site. Gly-241 contributes to the NADP(+) binding site.

The protein belongs to the shikimate dehydrogenase family. Homodimer.

The enzyme catalyses shikimate + NADP(+) = 3-dehydroshikimate + NADPH + H(+). The protein operates within metabolic intermediate biosynthesis; chorismate biosynthesis; chorismate from D-erythrose 4-phosphate and phosphoenolpyruvate: step 4/7. Functionally, involved in the biosynthesis of the chorismate, which leads to the biosynthesis of aromatic amino acids. Catalyzes the reversible NADPH linked reduction of 3-dehydroshikimate (DHSA) to yield shikimate (SA). This chain is Shikimate dehydrogenase (NADP(+)), found in Chelativorans sp. (strain BNC1).